A 583-amino-acid polypeptide reads, in one-letter code: Phosphoglucomutase, cytoplasmic 1 (583 aa).

Positions 25 and 124 each coordinate alpha-D-glucose 1,6-bisphosphate. Serine 124 serves as the catalytic Phosphoserine intermediate. 4 residues coordinate Mg(2+): serine 124, aspartate 300, aspartate 302, and aspartate 304. Serine 124 is subject to Phosphoserine. Alpha-D-glucose 1,6-bisphosphate contacts are provided by aspartate 304, arginine 305, threonine 368, glutamate 387, serine 389, and lysine 400.

This sequence belongs to the phosphohexose mutase family. Monomer. Requires Mg(2+) as cofactor. Post-translationally, autophosphorylated. In terms of tissue distribution, mostly expressed in roots and coleoptiles, and, to a lower extent, in leaves, pollen and developing seeds.

It is found in the cytoplasm. It catalyses the reaction alpha-D-glucose 1-phosphate = alpha-D-glucose 6-phosphate. The catalysed reaction is O-phospho-L-seryl-[protein] + alpha-D-glucose 1-phosphate = alpha-D-glucose 1,6-bisphosphate + L-seryl-[protein]. It carries out the reaction alpha-D-glucose 1,6-bisphosphate + L-seryl-[protein] = O-phospho-L-seryl-[protein] + alpha-D-glucose 6-phosphate. Its function is as follows. Catalyzes the reversible isomerization of alpha-D-glucose 1-phosphate to alpha-D-glucose 6-phosphate. The mechanism proceeds via the intermediate compound alpha-D-glucose 1,6-bisphosphate. This enzyme participates in both the breakdown and synthesis of glucose. The chain is Phosphoglucomutase, cytoplasmic 1 from Zea mays (Maize).